We begin with the raw amino-acid sequence, 432 residues long: Adenylosuccinate synthetase (432 aa).

GTP-binding positions include G13–K19 and G41–T43. The active-site Proton acceptor is the D14. D14 and G41 together coordinate Mg(2+). Residues D14–K17, N39–H42, T130, R144, Q225, T240, and R304 each bind IMP. Residue H42 is the Proton donor of the active site. A300–R306 lines the substrate pocket. GTP contacts are provided by residues R306, K332 to D334, and S415 to G417.

It belongs to the adenylosuccinate synthetase family. As to quaternary structure, homodimer. Mg(2+) serves as cofactor.

It localises to the cytoplasm. It carries out the reaction IMP + L-aspartate + GTP = N(6)-(1,2-dicarboxyethyl)-AMP + GDP + phosphate + 2 H(+). Its pathway is purine metabolism; AMP biosynthesis via de novo pathway; AMP from IMP: step 1/2. Plays an important role in the de novo pathway of purine nucleotide biosynthesis. Catalyzes the first committed step in the biosynthesis of AMP from IMP. The sequence is that of Adenylosuccinate synthetase from Citrobacter koseri (strain ATCC BAA-895 / CDC 4225-83 / SGSC4696).